The primary structure comprises 476 residues: Methylenetetrahydrofolate--tRNA-(uracil-5-)-methyltransferase TrmFO (476 aa).

Residue 14-19 (GGGLAG) participates in FAD binding. Residues 428-447 (LTEPPTHGADGKKLRGPEKS) form a disordered region. A compositionally biased stretch (basic and acidic residues) spans 436–447 (ADGKKLRGPEKS).

It belongs to the MnmG family. TrmFO subfamily. Requires FAD as cofactor.

It localises to the cytoplasm. It carries out the reaction uridine(54) in tRNA + (6R)-5,10-methylene-5,6,7,8-tetrahydrofolate + NADH + H(+) = 5-methyluridine(54) in tRNA + (6S)-5,6,7,8-tetrahydrofolate + NAD(+). The catalysed reaction is uridine(54) in tRNA + (6R)-5,10-methylene-5,6,7,8-tetrahydrofolate + NADPH + H(+) = 5-methyluridine(54) in tRNA + (6S)-5,6,7,8-tetrahydrofolate + NADP(+). Catalyzes the folate-dependent formation of 5-methyl-uridine at position 54 (M-5-U54) in all tRNAs. The sequence is that of Methylenetetrahydrofolate--tRNA-(uracil-5-)-methyltransferase TrmFO from Rhodopseudomonas palustris (strain BisA53).